The following is a 410-amino-acid chain: Zinc finger protein 322 (410 aa).

8 C2H2-type zinc fingers span residues 81–103 (YRCD…QRIH), 109–131 (YKCS…QRTH), 137–159 (YTCD…QRSH), 165–187 (YLCN…RRTH), 193–215 (FKCL…QRTH), 221–243 (YKCN…KRVH), 249–271 (YKCG…QRVH), and 277–299 (YKCL…QATH). The C2H2-type 9; degenerate zinc finger occupies 303–325 (FKCLEYEKSFNCSSDFIVHQRIH). Residues 361–383 (YKYSVCDKTFHHSSALLQHQTVH) form a C2H2-type 10; degenerate zinc finger. A Phosphoserine modification is found at S400.

The protein belongs to the krueppel C2H2-type zinc-finger protein family. As to quaternary structure, interacts with POU5F1.

It is found in the nucleus. The protein localises to the cytoplasm. Transcriptional activator. Important for maintenance of pluripotency in embryonic stem cells. Binds directly to the POU5F1 distal enhancer and the NANOG proximal promoter, and enhances expression of both genes. Can also bind to numerous other gene promoters and regulates expression of many other pluripotency factors, either directly or indirectly. Promotes inhibition of MAPK signaling during embryonic stem cell differentiation. This chain is Zinc finger protein 322 (Znf322), found in Mus musculus (Mouse).